The chain runs to 567 residues: PHD finger protein 1 (567 aa).

The segment at 1 to 31 is disordered; it reads MAQPPRLSRSGASSLWDPASPAPTSGPRPRL. One can recognise a Tudor domain in the interval 29-86; the sequence is PRLWEGQDVLARWTDGLLYLGTIKKVDSAREVCLVQFEDDSQFLVLWKDISPAALPGE. 2 PHD-type zinc fingers span residues 87–142 and 186–240; these read ELLC…CVFA and QSYC…CRGG. 2 disordered regions span residues 333–441 and 455–537; these read ARMP…TDAR and HPSA…GYLS. Phosphoserine is present on glycine 360. Basic and acidic residues predominate over residues 371–386; the sequence is PEPEPLRRRQKGKVEE. Position 420 is a phosphoserine (serine 420). Low complexity-rich tracts occupy residues 423 to 433, 456 to 470, and 488 to 510; these read PNQSYQGSSGY, PSAS…SGPP, and SAPH…LPRR. Over residues 524-534 the composition is skewed to gly residues; it reads GTGGGVRGGVG.

This sequence belongs to the Polycomblike family. In terms of assembly, interacts with CHMP1. Associated component of the PRC2 complex. Interacts with p53/TP53. As to expression, highest levels in heart, skeletal muscle, and pancreas, lower levels in brain, placenta, lung, liver and kidney.

The protein localises to the nucleus. It is found in the cytoplasm. The protein resides in the cytoskeleton. It localises to the microtubule organizing center. Its subcellular location is the centrosome. Its function is as follows. Polycomb group (PcG) that specifically binds histone H3 trimethylated at 'Lys-36' (H3K36me3) and recruits the PRC2 complex. Involved in DNA damage response and is recruited at double-strand breaks (DSBs). Acts by binding to H3K36me3, a mark for transcriptional activation, and recruiting the PRC2 complex: it is however unclear whether recruitment of the PRC2 complex to H3K36me3 leads to enhance or inhibit H3K27me3 methylation mediated by the PRC2 complex. According to some reports, PRC2 recruitment by PHF1 promotes H3K27me3 and subsequent gene silencing by inducing spreading of PRC2 and H3K27me3 into H3K36me3 loci. According to another report, PHF1 recruits the PRC2 complex at double-strand breaks (DSBs) and inhibits the activity of PRC2. Regulates p53/TP53 stability and prolonges its turnover: may act by specifically binding to a methylated from of p53/TP53. The protein is PHD finger protein 1 (PHF1) of Homo sapiens (Human).